An 89-amino-acid polypeptide reads, in one-letter code: ATP synthase subunit e, mitochondrial (89 aa).

Serine 1 is subject to N-acetylserine. Residues 8 to 25 traverse the membrane as a helical segment; that stretch reads YSSLAAGIVYGAYHTYTL.

As to quaternary structure, F-type ATP synthases have 2 components, the catalytic core F(1) and the membrane-embedded component F(0), linked together by a central stalk and a peripheral stalk. The central stalk, also called rotor shaft, is often seen as part of F(1). The peripheral stalk is seen as part of F(0). F(0) contains the membrane channel next to the rotor. F-type ATP synthases form dimers but each monomer functions independently in ATP generation. The dimer consists of 18 different polypeptides: ATP1 (subunit alpha, part of F(1), 3 molecules per monomer), ATP2 (subunit beta, part of F(1), 3 molecules per monomer), ATP3 (subunit gamma, part of the central stalk), ATP4 (subunit b, part of the peripheral stalk), ATP5/OSCP (subunit 5/OSCP, part of the peripheral stalk), ATP6 (subunit a, part of the peripheral stalk), ATP7 (subunit d, part of the peripheral stalk), ATP8 (subunit 8, part of the peripheral stalk), OLI1 (subunit c, part of the rotor, 10 molecules per monomer), ATP14 (subunit h, part of the peripheral stalk), ATP15 (subunit epsilon, part of the central stalk), ATP16 (subunit delta, part of the central stalk), ATP17 (subunit f, part of the peripheral stalk), ATP18 (subunit i/j, part of the peripheral stalk). Dimer-specific subunits are ATP19 (subunit k, at interface between monomers), ATP20 (subunit g, at interface between monomers), TIM11 (subunit e, at interface between monomers). Also contains subunit L.

Its subcellular location is the mitochondrion inner membrane. Functionally, mitochondrial membrane ATP synthase (F(1)F(0) ATP synthase or Complex V) produces ATP from ADP in the presence of a proton gradient across the membrane which is generated by electron transport complexes of the respiratory chain. F-type ATP synthases consist of two structural domains, F(1) - containing the extramembraneous catalytic core, and F(0) - containing the membrane proton channel, linked together by a central stalk and a peripheral stalk. During catalysis, ATP synthesis in the catalytic domain of F(1) is coupled via a rotary mechanism of the central stalk subunits to proton translocation. Part of the complex F(0) domain. Minor subunit located with subunit a/ATP6 in the membrane. Together with subunit g/ATP20, probably contributes to membrane curvature at the site of the ATP synthase dimer, ultimately contributing to formation of cristae. This Pichia angusta (Yeast) protein is ATP synthase subunit e, mitochondrial.